The primary structure comprises 455 residues: Chromosomal replication initiator protein DnaA (455 aa).

The domain I, interacts with DnaA modulators stretch occupies residues 1–75 (MDTNNNIEKE…EILSQNKVGM (75 aa)). A domain II region spans residues 75 to 106 (MHLAHSVDVRIEVAPKIQISTQSNINYKATKM). The domain III, AAA+ region stretch occupies residues 107-321 (SVKDSYTFEN…GAIIKISVNA (215 aa)). The ATP site is built by glycine 151, glycine 153, lysine 154, and threonine 155. The interval 322–455 (NLMNASIDLN…DKKTAFNSSE (134 aa)) is domain IV, binds dsDNA.

This sequence belongs to the DnaA family. As to quaternary structure, oligomerizes as a right-handed, spiral filament on DNA at oriC.

The protein resides in the cytoplasm. Functionally, plays an essential role in the initiation and regulation of chromosomal replication. ATP-DnaA binds to the origin of replication (oriC) to initiate formation of the DNA replication initiation complex once per cell cycle. Binds the DnaA box (a 9 base pair repeat at the origin) and separates the double-stranded (ds)DNA. Forms a right-handed helical filament on oriC DNA; dsDNA binds to the exterior of the filament while single-stranded (ss)DNA is stabiized in the filament's interior. The ATP-DnaA-oriC complex binds and stabilizes one strand of the AT-rich DNA unwinding element (DUE), permitting loading of DNA polymerase. After initiation quickly degrades to an ADP-DnaA complex that is not apt for DNA replication. Binds acidic phospholipids. This Helicobacter pylori (strain HPAG1) protein is Chromosomal replication initiator protein DnaA.